Here is a 219-residue protein sequence, read N- to C-terminus: MVQKPLIKQGYSLAEEIANSVSHGIGLVFGIVGLVLLLVQAVDLNASATAITSYSLYGGSMILLFLASTLYHAIPHQRAKMWLKKFDHCAIYLLIAGTYTPFLLVGLDSPLARGLMIVIWSLALLGILFKLTIAHRFKILSLVTYLAMGWLSLVVIYEMAVKLAAGSVTLLAVGGVVYSLGVIFYVCKRIPYNHAIWHGFVLGGSVCHFLAIYLYIGQA.

Residues 1 to 23 (MVQKPLIKQGYSLAEEIANSVSH) lie on the Cytoplasmic side of the membrane. A helical membrane pass occupies residues 24–44 (GIGLVFGIVGLVLLLVQAVDL). Residues 45–53 (NASATAITS) lie on the Periplasmic side of the membrane. The chain crosses the membrane as a helical span at residues 54–74 (YSLYGGSMILLFLASTLYHAI). Residues 75-90 (PHQRAKMWLKKFDHCA) lie on the Cytoplasmic side of the membrane. Residues 91 to 111 (IYLLIAGTYTPFLLVGLDSPL) traverse the membrane as a helical segment. The Periplasmic portion of the chain corresponds to 112–113 (AR). Residues 114–134 (GLMIVIWSLALLGILFKLTIA) form a helical membrane-spanning segment. The Cytoplasmic portion of the chain corresponds to 135–138 (HRFK). Residues 139–159 (ILSLVTYLAMGWLSLVVIYEM) traverse the membrane as a helical segment. Over 160-165 (AVKLAA) the chain is Periplasmic. Residues 166–186 (GSVTLLAVGGVVYSLGVIFYV) form a helical membrane-spanning segment. The Cytoplasmic portion of the chain corresponds to 187 to 195 (CKRIPYNHA). A helical transmembrane segment spans residues 196 to 216 (IWHGFVLGGSVCHFLAIYLYI). Residues 217–219 (GQA) lie on the Periplasmic side of the membrane.

This sequence belongs to the UPF0073 (Hly-III) family.

The protein localises to the cell inner membrane. The polypeptide is UPF0073 inner membrane protein YqfA (yqfA) (Escherichia coli O157:H7).